Consider the following 241-residue polypeptide: Small ribosomal subunit protein eS4 (241 aa).

In terms of domain architecture, S4 RNA-binding spans 43–105 (IPLVMVLRDI…INKTFRVLQD (63 aa)).

Belongs to the eukaryotic ribosomal protein eS4 family.

This is Small ribosomal subunit protein eS4 from Methanosphaera stadtmanae (strain ATCC 43021 / DSM 3091 / JCM 11832 / MCB-3).